A 212-amino-acid chain; its full sequence is Small ribosomal subunit protein uS3 (212 aa).

The 69-residue stretch at 38 to 106 (IRKFVKKTLY…EFAIEVNEIR (69 aa)) folds into the KH type-2 domain.

This sequence belongs to the universal ribosomal protein uS3 family. In terms of assembly, part of the 30S ribosomal subunit. Forms a tight complex with proteins S10 and S14.

In terms of biological role, binds the lower part of the 30S subunit head. Binds mRNA in the 70S ribosome, positioning it for translation. The protein is Small ribosomal subunit protein uS3 of Nitratidesulfovibrio vulgaris (strain ATCC 29579 / DSM 644 / CCUG 34227 / NCIMB 8303 / VKM B-1760 / Hildenborough) (Desulfovibrio vulgaris).